Reading from the N-terminus, the 452-residue chain is Adenylyltransferase and sulfurtransferase MOCS3 (452 aa).

Residues Gly99, Asp120, 127–131, Lys144, and 188–189 each bind ATP; these read SNLHR and DN. Residues Cys230 and Cys233 each contribute to the Zn(2+) site. The Glycyl thioester intermediate; for adenylyltransferase activity role is filled by Cys247. 2 residues coordinate Zn(2+): Cys305 and Cys308. Positions 354-450 constitute a Rhodanese domain; sequence KTKAHLLLDV…WTNQVDQSFP (97 aa). The Cysteine persulfide intermediate; for sulfurtransferase activity role is filled by Cys409.

This sequence in the N-terminal section; belongs to the HesA/MoeB/ThiF family. UBA4 subfamily. Zn(2+) serves as cofactor.

The protein localises to the cytoplasm. It is found in the cytosol. The catalysed reaction is [molybdopterin-synthase sulfur-carrier protein]-C-terminal Gly-Gly + ATP + H(+) = [molybdopterin-synthase sulfur-carrier protein]-C-terminal Gly-Gly-AMP + diphosphate. It carries out the reaction [molybdopterin-synthase sulfur-carrier protein]-C-terminal Gly-Gly-AMP + S-sulfanyl-L-cysteinyl-[cysteine desulfurase] + AH2 = [molybdopterin-synthase sulfur-carrier protein]-C-terminal-Gly-aminoethanethioate + L-cysteinyl-[cysteine desulfurase] + A + AMP + 2 H(+). It functions in the pathway tRNA modification; 5-methoxycarbonylmethyl-2-thiouridine-tRNA biosynthesis. It participates in cofactor biosynthesis; molybdopterin biosynthesis. Functionally, plays a central role in 2-thiolation of mcm(5)S(2)U at tRNA wobble positions of cytosolic tRNA(Lys), tRNA(Glu) and tRNA(Gln). Also essential during biosynthesis of the molybdenum cofactor. Acts by mediating the C-terminal thiocarboxylation of sulfur carriers URM1 and MOCS2A. Its N-terminus first activates URM1 and MOCS2A as acyl-adenylates (-COAMP), then the persulfide sulfur on the catalytic cysteine is transferred to URM1 and MOCS2A to form thiocarboxylation (-COSH) of their C-terminus. The reaction probably involves hydrogen sulfide that is generated from the persulfide intermediate and that acts as a nucleophile towards URM1 and MOCS2A. Subsequently, a transient disulfide bond is formed. Does not use thiosulfate as sulfur donor; NFS1 probably acting as a sulfur donor for thiocarboxylation reactions. This chain is Adenylyltransferase and sulfurtransferase MOCS3, found in Drosophila virilis (Fruit fly).